Here is a 542-residue protein sequence, read N- to C-terminus: Delta 8-(E)-sphingolipid desaturase (542 aa).

The Cytochrome b5 heme-binding domain maps to 1–75; that stretch reads MVVSREEVRE…FKRWSIGRVK (75 aa). Heme is bound by residues His35 and His58. Helical transmembrane passes span 215 to 235 and 248 to 268; these read WYTLSAISIGLMWQQLVFIAH and IDNIIGIIIANFIGGLSLGWW. The Histidine box-1 motif lies at 235-239; the sequence is HDAGH. Residues 272-276 carry the Histidine box-2 motif; it reads HNVHH. Transmembrane regions (helical) follow at residues 329-346, 360-380, and 393-413; these read LYYPILSFGRFNLYRLSW, AAWFRYLELIGLCFFSYWFFY, and FWFLLISHWTTMIVHVQIVLS. Residues 455–459 carry the Histidine box-3 motif; that stretch reads QAIHH.

The protein belongs to the fatty acid desaturase type 1 family.

The protein localises to the membrane. It catalyses the reaction an N-acylsphing-4-enine + 2 Fe(II)-[cytochrome b5] + O2 + 2 H(+) = a (4E,8E)-4-sphinga-4,8-dienine ceramide + 2 Fe(III)-[cytochrome b5] + 2 H2O. It functions in the pathway lipid metabolism; sphingolipid metabolism. In terms of biological role, delta(8)-fatty-acid desaturase which introduces a double bond at the 8-position in the long-chain base (LCB) of ceramides. Required for the formation of the di-unsaturated sphingoid base (E,E)-sphinga-4,8-dienine during glucosylceramide (GluCer) biosynthesis. The sequence is that of Delta 8-(E)-sphingolipid desaturase from Komagataella phaffii (strain GS115 / ATCC 20864) (Yeast).